Reading from the N-terminus, the 619-residue chain is Dihydroxy-acid dehydratase (619 aa).

D81 provides a ligand contact to Mg(2+). A [2Fe-2S] cluster-binding site is contributed by C122. D123 and K124 together coordinate Mg(2+). K124 bears the N6-carboxylysine mark. C201 lines the [2Fe-2S] cluster pocket. Residue E496 coordinates Mg(2+). Catalysis depends on S522, which acts as the Proton acceptor.

The protein belongs to the IlvD/Edd family. Homodimer. It depends on [2Fe-2S] cluster as a cofactor. Requires Mg(2+) as cofactor.

The catalysed reaction is (2R)-2,3-dihydroxy-3-methylbutanoate = 3-methyl-2-oxobutanoate + H2O. The enzyme catalyses (2R,3R)-2,3-dihydroxy-3-methylpentanoate = (S)-3-methyl-2-oxopentanoate + H2O. It participates in amino-acid biosynthesis; L-isoleucine biosynthesis; L-isoleucine from 2-oxobutanoate: step 3/4. The protein operates within amino-acid biosynthesis; L-valine biosynthesis; L-valine from pyruvate: step 3/4. Functions in the biosynthesis of branched-chain amino acids. Catalyzes the dehydration of (2R,3R)-2,3-dihydroxy-3-methylpentanoate (2,3-dihydroxy-3-methylvalerate) into 2-oxo-3-methylpentanoate (2-oxo-3-methylvalerate) and of (2R)-2,3-dihydroxy-3-methylbutanoate (2,3-dihydroxyisovalerate) into 2-oxo-3-methylbutanoate (2-oxoisovalerate), the penultimate precursor to L-isoleucine and L-valine, respectively. The sequence is that of Dihydroxy-acid dehydratase from Paracidovorax citrulli (strain AAC00-1) (Acidovorax citrulli).